A 234-amino-acid chain; its full sequence is Phosphoglycolate phosphatase (234 aa).

Residue D9 is the Nucleophile of the active site. 2 residues coordinate Mg(2+): D9 and D11. A substrate-binding site is contributed by K162. 2 residues coordinate Mg(2+): D185 and D189.

The protein belongs to the archaeal SPP-like hydrolase family. Requires Mg(2+) as cofactor.

It carries out the reaction 2-phosphoglycolate + H2O = glycolate + phosphate. Catalyzes the dephosphorylation of 2-phosphoglycolate. The protein is Phosphoglycolate phosphatase of Methanobrevibacter smithii (strain ATCC 35061 / DSM 861 / OCM 144 / PS).